Consider the following 156-residue polypeptide: Small ribosomal subunit protein uS7 (156 aa).

This sequence belongs to the universal ribosomal protein uS7 family. As to quaternary structure, part of the 30S ribosomal subunit. Contacts proteins S9 and S11.

In terms of biological role, one of the primary rRNA binding proteins, it binds directly to 16S rRNA where it nucleates assembly of the head domain of the 30S subunit. Is located at the subunit interface close to the decoding center, probably blocks exit of the E-site tRNA. The chain is Small ribosomal subunit protein uS7 from Lacticaseibacillus casei (strain BL23) (Lactobacillus casei).